We begin with the raw amino-acid sequence, 101 residues long: Small ribosomal subunit protein uS14 (101 aa).

It belongs to the universal ribosomal protein uS14 family. In terms of assembly, part of the 30S ribosomal subunit. Contacts proteins S3 and S10.

Binds 16S rRNA, required for the assembly of 30S particles and may also be responsible for determining the conformation of the 16S rRNA at the A site. The chain is Small ribosomal subunit protein uS14 from Francisella tularensis subsp. novicida (strain U112).